The chain runs to 876 residues: AP-5 complex subunit beta-1 (876 aa).

Probably part of the adaptor protein complex 5 (AP-5), a tetramer composed of AP5B1, AP5M1, AP5S1 and AP5Z1. Interacts with ZFYVE26 and SPG11.

Functionally, as part of AP-5, a probable fifth adaptor protein complex it may be involved in endosomal transport. This chain is AP-5 complex subunit beta-1 (Ap5b1), found in Mus musculus (Mouse).